The sequence spans 465 residues: GTPase Der (465 aa).

EngA-type G domains follow at residues 3-166 (FLVA…LNEY) and 184-358 (IHFS…ACAS). GTP contacts are provided by residues 9-16 (GRANVGKS), 56-60 (DTGGI), 118-121 (NKVD), 190-197 (GRPNVGKS), 237-241 (DTAGV), and 302-305 (NKWD). The 85-residue stretch at 359 to 443 (KKITTADATR…PIVFEFKQSE (85 aa)) folds into the KH-like domain. The disordered stretch occupies residues 446–465 (FADRKNKRSKDEGSKSKKVK).

The protein belongs to the TRAFAC class TrmE-Era-EngA-EngB-Septin-like GTPase superfamily. EngA (Der) GTPase family. As to quaternary structure, associates with the 50S ribosomal subunit.

In terms of biological role, GTPase that plays an essential role in the late steps of ribosome biogenesis. In Francisella tularensis subsp. tularensis (strain FSC 198), this protein is GTPase Der.